The chain runs to 239 residues: Ribonuclease PH (239 aa).

Phosphate is bound by residues arginine 87 and 125 to 127 (GTR).

The protein belongs to the RNase PH family. Homohexameric ring arranged as a trimer of dimers.

The catalysed reaction is tRNA(n+1) + phosphate = tRNA(n) + a ribonucleoside 5'-diphosphate. Its function is as follows. Phosphorolytic 3'-5' exoribonuclease that plays an important role in tRNA 3'-end maturation. Removes nucleotide residues following the 3'-CCA terminus of tRNAs; can also add nucleotides to the ends of RNA molecules by using nucleoside diphosphates as substrates, but this may not be physiologically important. Probably plays a role in initiation of 16S rRNA degradation (leading to ribosome degradation) during starvation. The protein is Ribonuclease PH of Cellvibrio japonicus (strain Ueda107) (Pseudomonas fluorescens subsp. cellulosa).